We begin with the raw amino-acid sequence, 877 residues long: Probable Ras GTPase-activating-like protein ngap (877 aa).

The C2 domain occupies 72–218 (TPSATYESLI…KDQKERELWF (147 aa)). Positions 350–456 (SDDGDISGLK…ETINLSSSIN (107 aa)) are disordered. Low complexity predominate over residues 389 to 409 (TTATTTPSSTPSTPISPSSQS). Polar residues predominate over residues 410-425 (NNIKTPDSKTRSSSNA). Composition is skewed to low complexity over residues 426-438 (STNT…KSTG) and 447-456 (ETINLSSSIN). The region spanning 591 to 802 (GKCLYLLKSL…ENMKSFINTL (212 aa)) is the Ras-GAP domain. The stretch at 820–848 (LEKELACLYRHLIKQRQDMAEEMESTESE) forms a coiled coil.

May function as a Ras GTPase-activating protein. This chain is Probable Ras GTPase-activating-like protein ngap (ngap), found in Dictyostelium discoideum (Social amoeba).